The primary structure comprises 513 residues: Putative ribose/galactose/methyl galactoside import ATP-binding protein 2 (513 aa).

ABC transporter domains are found at residues leucine 24–glutamate 260 and valine 270–leucine 510. Glycine 56–serine 63 is a binding site for ATP.

The protein belongs to the ABC transporter superfamily. Carbohydrate importer 2 (CUT2) (TC 3.A.1.2) family.

The protein resides in the cell inner membrane. It catalyses the reaction D-ribose(out) + ATP + H2O = D-ribose(in) + ADP + phosphate + H(+). The enzyme catalyses D-galactose(out) + ATP + H2O = D-galactose(in) + ADP + phosphate + H(+). Part of an ABC transporter complex involved in carbohydrate import. Could be involved in ribose, galactose and/or methyl galactoside import. Responsible for energy coupling to the transport system. The polypeptide is Putative ribose/galactose/methyl galactoside import ATP-binding protein 2 (Agrobacterium fabrum (strain C58 / ATCC 33970) (Agrobacterium tumefaciens (strain C58))).